The following is a 204-amino-acid chain: Guanylate kinase (204 aa).

The Guanylate kinase-like domain maps to 5-184 (GLLLVLSGPS…AVDHIKAIVD (180 aa)). 12 to 19 (GPSGVGKG) contributes to the ATP binding site.

This sequence belongs to the guanylate kinase family.

It is found in the cytoplasm. It catalyses the reaction GMP + ATP = GDP + ADP. In terms of biological role, essential for recycling GMP and indirectly, cGMP. The protein is Guanylate kinase of Lactobacillus acidophilus (strain ATCC 700396 / NCK56 / N2 / NCFM).